The primary structure comprises 341 residues: Endolytic peptidoglycan transglycosylase RlpA (341 aa).

Residues 1-26 form the signal peptide; the sequence is MSKRVRSSLILPAVCGLGLAAVLLSS. The N-palmitoyl cysteine moiety is linked to residue C27. Residue C27 is the site of S-diacylglycerol cysteine attachment. The 82-residue stretch at 260–341 folds into the SPOR domain; that stretch reads SLPADGLYLQ…LGQPTLVRPD (82 aa).

It belongs to the RlpA family.

It localises to the cell membrane. In terms of biological role, lytic transglycosylase with a strong preference for naked glycan strands that lack stem peptides. Required for efficient separation of daughter cells and maintenance of rod shape. This Pseudomonas aeruginosa (strain UCBPP-PA14) protein is Endolytic peptidoglycan transglycosylase RlpA.